Consider the following 441-residue polypeptide: Serine hydroxymethyltransferase (441 aa).

(6S)-5,6,7,8-tetrahydrofolate is bound by residues Leu-119 and Gly-123–Leu-125. Lys-228 carries the post-translational modification N6-(pyridoxal phosphate)lysine. Ser-370–Phe-372 provides a ligand contact to (6S)-5,6,7,8-tetrahydrofolate.

It belongs to the SHMT family. As to quaternary structure, homodimer. It depends on pyridoxal 5'-phosphate as a cofactor.

It localises to the cytoplasm. It carries out the reaction (6R)-5,10-methylene-5,6,7,8-tetrahydrofolate + glycine + H2O = (6S)-5,6,7,8-tetrahydrofolate + L-serine. Its pathway is one-carbon metabolism; tetrahydrofolate interconversion. It functions in the pathway amino-acid biosynthesis; glycine biosynthesis; glycine from L-serine: step 1/1. In terms of biological role, catalyzes the reversible interconversion of serine and glycine with tetrahydrofolate (THF) serving as the one-carbon carrier. This reaction serves as the major source of one-carbon groups required for the biosynthesis of purines, thymidylate, methionine, and other important biomolecules. Also exhibits THF-independent aldolase activity toward beta-hydroxyamino acids, producing glycine and aldehydes, via a retro-aldol mechanism. This is Serine hydroxymethyltransferase from Chlorobium phaeovibrioides (strain DSM 265 / 1930) (Prosthecochloris vibrioformis (strain DSM 265)).